Here is a 366-residue protein sequence, read N- to C-terminus: MFEINPVKNRIQDLSDRTAVLRGYLCDYDAKKERLEEVNAELEQPDVWNEPERAQALGKERSTLEEIVTTIDQLEQGLEDVSGLLELAVEADDEETFNETIAELEVLDGKLGQLEFRRMFSGEYDRANCYLDLQAGSGGTEAQDWASMLLRMYLRWAESRGFKTEIIEESDGDVAGLKSATVKIIGEYAFGWLRTETGVHRLVRKSPFDSGGRRHTSFSSAFVYPEVDDDIDIEINPADLRIDVYRASGAGGQHVNKTESAVRITHIPTNIVTQCQNDRSQHKNKDQAMKQLKAKLYEFEMQKKNADKQVLEDNKSDIGWGSQIRSYVLDDSRIKDLRTGVETRNTQAVLDGDLDKFIEASLKAGL.

An N5-methylglutamine modification is found at Q253.

The protein belongs to the prokaryotic/mitochondrial release factor family. Post-translationally, methylated by PrmC. Methylation increases the termination efficiency of RF2.

The protein resides in the cytoplasm. In terms of biological role, peptide chain release factor 2 directs the termination of translation in response to the peptide chain termination codons UGA and UAA. In Yersinia pestis, this protein is Peptide chain release factor 2.